The primary structure comprises 662 residues: DNA ligase (662 aa).

NAD(+) is bound by residues 34–38, 83–84, and glutamate 113; these read DYDYD and SI. Lysine 115 acts as the N6-AMP-lysine intermediate in catalysis. Positions 136, 172, 286, and 310 each coordinate NAD(+). Cysteine 404, cysteine 407, cysteine 422, and cysteine 427 together coordinate Zn(2+). Residues 583–662 form the BRCT domain; it reads RASASCQGKT…SDLLKILYPN (80 aa).

This sequence belongs to the NAD-dependent DNA ligase family. LigA subfamily. Mg(2+) serves as cofactor. Mn(2+) is required as a cofactor.

It carries out the reaction NAD(+) + (deoxyribonucleotide)n-3'-hydroxyl + 5'-phospho-(deoxyribonucleotide)m = (deoxyribonucleotide)n+m + AMP + beta-nicotinamide D-nucleotide.. DNA ligase that catalyzes the formation of phosphodiester linkages between 5'-phosphoryl and 3'-hydroxyl groups in double-stranded DNA using NAD as a coenzyme and as the energy source for the reaction. It is essential for DNA replication and repair of damaged DNA. The sequence is that of DNA ligase from Chlamydia felis (strain Fe/C-56) (Chlamydophila felis).